A 477-amino-acid polypeptide reads, in one-letter code: Trigger factor (477 aa).

In terms of domain architecture, PPIase FKBP-type spans 169–254; the sequence is EDRVTIDYLG…VKEVAKPNEL (86 aa). Residues 435-477 are disordered; it reads VSKEELTAEDEDAASEAKPAKKAAAKKKAAPKKKAEEGKSEEA. A compositionally biased stretch (basic residues) spans 454-466; the sequence is AKKAAAKKKAAPK. The span at 467 to 477 shows a compositional bias: basic and acidic residues; the sequence is KKAEEGKSEEA.

It belongs to the FKBP-type PPIase family. Tig subfamily.

The protein resides in the cytoplasm. The enzyme catalyses [protein]-peptidylproline (omega=180) = [protein]-peptidylproline (omega=0). Involved in protein export. Acts as a chaperone by maintaining the newly synthesized protein in an open conformation. Functions as a peptidyl-prolyl cis-trans isomerase. This chain is Trigger factor (tig), found in Brucella melitensis biotype 1 (strain ATCC 23456 / CCUG 17765 / NCTC 10094 / 16M).